Reading from the N-terminus, the 339-residue chain is Ketol-acid reductoisomerase (NADP(+)) (339 aa).

Residues Met1–Thr182 form the KARI N-terminal Rossmann domain. NADP(+) is bound by residues Tyr24 to Gln27, Arg48, Ser51, Thr53, and Asp83 to Gln86. Residue His108 is part of the active site. NADP(+) is bound at residue Gly134. Residues Thr183–Ile328 enclose the KARI C-terminal knotted domain. Positions 191, 195, 227, and 231 each coordinate Mg(2+). Ser252 lines the substrate pocket.

This sequence belongs to the ketol-acid reductoisomerase family. The cofactor is Mg(2+).

It carries out the reaction (2R)-2,3-dihydroxy-3-methylbutanoate + NADP(+) = (2S)-2-acetolactate + NADPH + H(+). It catalyses the reaction (2R,3R)-2,3-dihydroxy-3-methylpentanoate + NADP(+) = (S)-2-ethyl-2-hydroxy-3-oxobutanoate + NADPH + H(+). Its pathway is amino-acid biosynthesis; L-isoleucine biosynthesis; L-isoleucine from 2-oxobutanoate: step 2/4. It participates in amino-acid biosynthesis; L-valine biosynthesis; L-valine from pyruvate: step 2/4. In terms of biological role, involved in the biosynthesis of branched-chain amino acids (BCAA). Catalyzes an alkyl-migration followed by a ketol-acid reduction of (S)-2-acetolactate (S2AL) to yield (R)-2,3-dihydroxy-isovalerate. In the isomerase reaction, S2AL is rearranged via a Mg-dependent methyl migration to produce 3-hydroxy-3-methyl-2-ketobutyrate (HMKB). In the reductase reaction, this 2-ketoacid undergoes a metal-dependent reduction by NADPH to yield (R)-2,3-dihydroxy-isovalerate. In Xanthobacter autotrophicus (strain ATCC BAA-1158 / Py2), this protein is Ketol-acid reductoisomerase (NADP(+)).